The following is a 58-amino-acid chain: Small ribosomal subunit protein bS21 (58 aa).

A disordered region spans residues 34 to 58 (KREHYESPSVRRKKKSEAARRRKRR). The segment covering 43–58 (VRRKKKSEAARRRKRR) has biased composition (basic residues).

This sequence belongs to the bacterial ribosomal protein bS21 family.

In Caldicellulosiruptor bescii (strain ATCC BAA-1888 / DSM 6725 / KCTC 15123 / Z-1320) (Anaerocellum thermophilum), this protein is Small ribosomal subunit protein bS21.